A 218-amino-acid chain; its full sequence is Uracil-DNA glycosylase (218 aa).

Catalysis depends on Asp-68, which acts as the Proton acceptor.

This sequence belongs to the uracil-DNA glycosylase (UDG) superfamily. UNG family. As to quaternary structure, homodimer. Interacts with protein OPG148. Component of the Uracil-DNA glycosylase(UDG)-OPG148-polymerase complex; OPG148 and UDG form a heterodimeric processivity factor that associates with OPG71 to form the processive polymerase holoenzyme.

It carries out the reaction Hydrolyzes single-stranded DNA or mismatched double-stranded DNA and polynucleotides, releasing free uracil.. Its function is as follows. Plays an essential role in viral replication as a component of the DNA polymerase processivity factor. Excises uracil residues from the DNA which can arise as a result of misincorporation of dUMP residues by DNA polymerase or due to deamination of cytosine. The polypeptide is Uracil-DNA glycosylase (OPG116) (Homo sapiens (Human)).